Here is a 182-residue protein sequence, read N- to C-terminus: CKLF-like MARVEL transmembrane domain-containing protein 3 (182 aa).

Residues 1–12 show a composition bias toward acidic residues; that stretch reads MWPPDPDPDPDP. Residues 1 to 21 are disordered; the sequence is MWPPDPDPDPDPEPAGGSRPG. The 120-residue stretch at 36 to 155 folds into the MARVEL domain; sequence FLCSLKGRLL…DFYLIFNDVA (120 aa). 3 consecutive transmembrane segments (helical) span residues 64–84, 101–121, and 131–151; these read ASAF…FLFA, MDFL…ITAI, and AAGV…YLIF.

Belongs to the chemokine-like factor family. In terms of tissue distribution, expressed in the leukocytes, placenta and testis.

Its subcellular location is the membrane. The polypeptide is CKLF-like MARVEL transmembrane domain-containing protein 3 (CMTM3) (Homo sapiens (Human)).